A 942-amino-acid polypeptide reads, in one-letter code: Valine--tRNA ligase (942 aa).

The short motif at 43-53 (PNVTGTLHMGH) is the 'HIGH' region element. Positions 551–555 (KMSKS) match the 'KMSKS' region motif. Lysine 554 lines the ATP pocket. The stretch at 876-942 (EGLVDLDAER…AGLREQRAKL (67 aa)) forms a coiled coil.

This sequence belongs to the class-I aminoacyl-tRNA synthetase family. ValS type 1 subfamily. Monomer.

The protein localises to the cytoplasm. The catalysed reaction is tRNA(Val) + L-valine + ATP = L-valyl-tRNA(Val) + AMP + diphosphate. Its function is as follows. Catalyzes the attachment of valine to tRNA(Val). As ValRS can inadvertently accommodate and process structurally similar amino acids such as threonine, to avoid such errors, it has a 'posttransfer' editing activity that hydrolyzes mischarged Thr-tRNA(Val) in a tRNA-dependent manner. This Stenotrophomonas maltophilia (strain K279a) protein is Valine--tRNA ligase.